The chain runs to 409 residues: NADH-quinone oxidoreductase subunit 4 (409 aa).

The protein belongs to the complex I 49 kDa subunit family. NDH-1 is composed of 15 different subunits, Nqo1 to Nqo15. The complex has a L-shaped structure, with the hydrophobic arm (subunits Nqo7, Nqo8 and Nqo10 to Nqo14) embedded in the membrane and the hydrophilic peripheral arm (subunits Nqo1 to Nqo6, Nqo9 and Nqo15) protruding into the bacterial cytoplasm. The hydrophilic domain contains all the redox centers. This subunit interacts extensively with Nqo6.

The protein resides in the cell membrane. It catalyses the reaction a quinone + NADH + 5 H(+)(in) = a quinol + NAD(+) + 4 H(+)(out). Its function is as follows. NDH-1 shuttles electrons from NADH, via FMN and iron-sulfur (Fe-S) centers, to quinones in the respiratory chain. The immediate electron acceptor for the enzyme in this species is menaquinone. Couples the redox reaction to proton translocation (for every two electrons transferred, four hydrogen ions are translocated across the cytoplasmic membrane), and thus conserves the redox energy in a proton gradient required for the synthesis of ATP. The Nqo4 subunit may contain the quinone-binding site. In Thermus thermophilus (strain ATCC 27634 / DSM 579 / HB8), this protein is NADH-quinone oxidoreductase subunit 4 (nqo4).